The sequence spans 408 residues: 4-hydroxy-3-methylbut-2-en-1-yl diphosphate synthase (ferredoxin) (408 aa).

Residues 1 to 21 (MQTLPTPTTSSNTANQSTFDT) are compositionally biased toward polar residues. A disordered region spans residues 1 to 26 (MQTLPTPTTSSNTANQSTFDTTIKRR). The [4Fe-4S] cluster site is built by Cys-317, Cys-320, Cys-351, and Glu-358.

The protein belongs to the IspG family. The cofactor is [4Fe-4S] cluster.

The enzyme catalyses (2E)-4-hydroxy-3-methylbut-2-enyl diphosphate + 2 oxidized [2Fe-2S]-[ferredoxin] + H2O = 2-C-methyl-D-erythritol 2,4-cyclic diphosphate + 2 reduced [2Fe-2S]-[ferredoxin] + H(+). Its pathway is isoprenoid biosynthesis; isopentenyl diphosphate biosynthesis via DXP pathway; isopentenyl diphosphate from 1-deoxy-D-xylulose 5-phosphate: step 5/6. Converts 2C-methyl-D-erythritol 2,4-cyclodiphosphate (ME-2,4cPP) into 1-hydroxy-2-methyl-2-(E)-butenyl 4-diphosphate. The sequence is that of 4-hydroxy-3-methylbut-2-en-1-yl diphosphate synthase (ferredoxin) from Trichormus variabilis (strain ATCC 29413 / PCC 7937) (Anabaena variabilis).